A 218-amino-acid polypeptide reads, in one-letter code: ETS domain-containing protein ets-7 (218 aa).

Positions 12-93 form a DNA-binding region, ETS; that stretch reads QRLLNFLRGL…KGKDSRYCFL (82 aa). Residues 131–161 show a composition bias toward low complexity; it reads TSNFSLQSSPSSSSNSSSARTMSATSSPTSS. The tract at residues 131 to 162 is disordered; the sequence is TSNFSLQSSPSSSSNSSSARTMSATSSPTSSL.

It belongs to the ETS family.

It is found in the nucleus. Its function is as follows. Probable transcription factor. Involved in responses to oxidative stress. This is ETS domain-containing protein ets-7 from Caenorhabditis elegans.